The sequence spans 132 residues: Interleukin-4 (132 aa).

An N-terminal signal peptide occupies residues 1–24 (MGLTSQLIPTLVCLLALTSTFVHG). Residues asparagine 28, asparagine 45, asparagine 62, asparagine 83, asparagine 95, and asparagine 101 are each glycosylated (N-linked (GlcNAc...) asparagine). 2 disulfide bridges follow: cysteine 48–cysteine 84 and cysteine 70–cysteine 104.

The protein belongs to the IL-4/IL-13 family.

The protein localises to the secreted. In terms of biological role, participates in at least several B-cell activation processes as well as of other cell types. It is a costimulator of DNA-synthesis. It induces the expression of class II MHC molecules on resting B-cells. It enhances both secretion and cell surface expression of IgE and IgG1. It also regulates the expression of the low affinity Fc receptor for IgE (CD23) on both lymphocytes and monocytes. Positively regulates IL31RA expression in macrophages. Stimulates autophagy in dendritic cells by interfering with mTORC1 signaling and through the induction of RUFY4. This is Interleukin-4 (IL4) from Canis lupus familiaris (Dog).